The chain runs to 255 residues: L-erythrulose-1-phosphate isomerase (255 aa).

His98 serves as the catalytic Electrophile. Residue Glu171 is the Proton acceptor of the active site. Substrate-binding residues include Gly177 and Ser214.

Belongs to the triosephosphate isomerase family. As to quaternary structure, homodimer.

It is found in the cytoplasm. It carries out the reaction L-erythrulose 1-phosphate = D-erythrulose 4-phosphate. Its pathway is carbohydrate metabolism; erythritol degradation. Its function is as follows. Catalyzes the isomerization of D-erythrulose-4P to L-erythrulose-1P. This chain is L-erythrulose-1-phosphate isomerase, found in Rhizobium meliloti (strain 1021) (Ensifer meliloti).